Here is a 400-residue protein sequence, read N- to C-terminus: Methylthioribose kinase (400 aa).

ATP is bound by residues N44, K61, and 115–117; that span reads EDL. Position 233 (D233) interacts with substrate. 250–252 contributes to the ATP binding site; sequence DPE. R340 serves as a coordination point for substrate.

Belongs to the methylthioribose kinase family. Homodimer.

The enzyme catalyses 5-(methylsulfanyl)-D-ribose + ATP = 5-(methylsulfanyl)-alpha-D-ribose 1-phosphate + ADP + H(+). It participates in amino-acid biosynthesis; L-methionine biosynthesis via salvage pathway; S-methyl-5-thio-alpha-D-ribose 1-phosphate from S-methyl-5'-thioadenosine (hydrolase route): step 2/2. Catalyzes the phosphorylation of methylthioribose into methylthioribose-1-phosphate. This is Methylthioribose kinase from Geobacillus sp. (strain WCH70).